A 23-amino-acid chain; its full sequence is GIKEFAHSLGKFGKAFVGGILNQ.

Expressed by the skin glands.

It is found in the secreted. In terms of biological role, antimicrobial peptide. In Xenopus ruwenzoriensis (Uganda clawed frog), this protein is Magainin-R2.